The sequence spans 312 residues: DNA-directed RNA polymerase subunit alpha (312 aa).

The tract at residues 1 to 229 (MLQYQIDRIE…ELFQPLATVT (229 aa)) is alpha N-terminal domain (alpha-NTD). The alpha C-terminal domain (alpha-CTD) stretch occupies residues 246 to 312 (IPLEELNLSV…ISIPQSRTSA (67 aa)).

This sequence belongs to the RNA polymerase alpha chain family. As to quaternary structure, in cyanobacteria the RNAP catalytic core is composed of 2 alpha, 1 beta, 1 beta', 1 gamma and 1 omega subunit. When a sigma factor is associated with the core the holoenzyme is formed, which can initiate transcription.

It carries out the reaction RNA(n) + a ribonucleoside 5'-triphosphate = RNA(n+1) + diphosphate. In terms of biological role, DNA-dependent RNA polymerase catalyzes the transcription of DNA into RNA using the four ribonucleoside triphosphates as substrates. The sequence is that of DNA-directed RNA polymerase subunit alpha from Prochlorococcus marinus (strain SARG / CCMP1375 / SS120).